Reading from the N-terminus, the 514-residue chain is ATP synthase subunit alpha (514 aa).

Residue 170–177 (GDRQIGKT) participates in ATP binding.

The protein belongs to the ATPase alpha/beta chains family. In terms of assembly, F-type ATPases have 2 components, CF(1) - the catalytic core - and CF(0) - the membrane proton channel. CF(1) has five subunits: alpha(3), beta(3), gamma(1), delta(1), epsilon(1). CF(0) has three main subunits: a(1), b(2) and c(9-12). The alpha and beta chains form an alternating ring which encloses part of the gamma chain. CF(1) is attached to CF(0) by a central stalk formed by the gamma and epsilon chains, while a peripheral stalk is formed by the delta and b chains.

It localises to the cell inner membrane. It catalyses the reaction ATP + H2O + 4 H(+)(in) = ADP + phosphate + 5 H(+)(out). Functionally, produces ATP from ADP in the presence of a proton gradient across the membrane. The alpha chain is a regulatory subunit. This Pseudomonas putida (strain ATCC 47054 / DSM 6125 / CFBP 8728 / NCIMB 11950 / KT2440) protein is ATP synthase subunit alpha.